Consider the following 394-residue polypeptide: MIVFIFLAMGLSLENEYTSQTNNCTYLREQCLRDANGCKHAWRVMEDACNDSDPGDPCKMRNSSYCNLSIQYLVESNFQFKECLCTDDFYCTVNKLLGKKCINKSDNVKEDKFKWNLTTRSHHGFKGMWSCLEVAEACVGDVVCNAQLASYLKACSANGNPCDLKQCQAAIRFFYQNIPFNIAQMLAFCDCAQSDIPCQQSKEALHSKTCAVNMVPPPTCLSVIRSCQNDELCRRHYRTFQSKCWQRVTRKCHEDENCISTLSKQDLTCSGSDDCKAAYIDILGTVLQVQCTCRTITQSEESLCKIFQHMLHRKSCFNYPTLSNVKGMALYTRKHANKITLTGFHSPFNGEVIYAAMCMTVTCGILLLVMVKLRTSRISSKARDPSSIQIPGEL.

Residues 1 to 18 (MIVFIFLAMGLSLENEYT) form the signal peptide. Topologically, residues 19 to 351 (SQTNNCTYLR…TGFHSPFNGE (333 aa)) are extracellular. N-linked (GlcNAc...) asparagine glycosylation is found at Asn23, Asn50, Asn62, Asn67, Asn103, and Asn116. Disulfide bonds link Cys131-Cys189, Cys138-Cys144, Cys155-Cys167, Cys162-Cys210, Cys191-Cys198, Cys220-Cys291, Cys227-Cys233, Cys244-Cys275, Cys252-Cys258, Cys269-Cys316, and Cys293-Cys304. The required for interaction with GDF15 stretch occupies residues 149 to 228 (ASYLKACSAN…TCLSVIRSCQ (80 aa)). The helical transmembrane segment at 352 to 371 (VIYAAMCMTVTCGILLLVMV) threads the bilayer. Topologically, residues 372-394 (KLRTSRISSKARDPSSIQIPGEL) are cytoplasmic.

This sequence belongs to the GDNFR family. In terms of assembly, interacts (via the extracellular domain) with GDF15 and RET; receptor of GDF15, mediates cellular signaling through interaction with RET after GDF15-binding. Interaction with RET requires previous GDF15-binding. Cleaved and inactivated by MMP14, inhibiting the GDF15-GFRAL aversive response. Expressed in the brainstem, restricted to cells in the area postrema and the immediately adjacent region of the nucleus tractus solitarius (at protein level). Detected at low levels in testis and adipose tissue.

It localises to the cell membrane. Its activity is regulated as follows. Specifically inhibited by 3P10 monoclonal antibody. Strongly activated by LY3463251, a long-acting and stable agonist composed of GDF15 conjugated monomeric human IgG4 Fc. In terms of biological role, brainstem-restricted receptor for GDF15 hormone, which triggers an aversive response, characterized by nausea, vomiting, and/or loss of appetite in response to various stresses. The aversive response is both required to reduce continuing exposure to those stresses at the time of exposure and to promote avoidance behavior in the future. The GDF15-GFRAL aversive response is triggered by stresses, such as anticancer drugs (camptothecin or cisplatin), cancers or drugs such as metformin. Upon interaction with its ligand, GDF15, mediates the GDF15-induced autophosphorylation and activation of the RET tyrosine kinase receptor, leading to activation of MAPK- and AKT- signaling pathways. Ligand-binding activates GFRAL-expressing neurons localized in the area postrema and nucleus tractus solitarius of the brainstem. The GDF15-GFRAL signal induces expression of genes involved in metabolism, such as lipid metabolism in adipose tissues. The protein is GDNF family receptor alpha-like of Homo sapiens (Human).